The following is a 300-amino-acid chain: Sulfate adenylyltransferase subunit 2 (300 aa).

Belongs to the PAPS reductase family. CysD subfamily. In terms of assembly, heterodimer composed of CysD, the smaller subunit, and CysN.

It carries out the reaction sulfate + ATP + H(+) = adenosine 5'-phosphosulfate + diphosphate. Its pathway is sulfur metabolism; hydrogen sulfide biosynthesis; sulfite from sulfate: step 1/3. Its function is as follows. With CysN forms the ATP sulfurylase (ATPS) that catalyzes the adenylation of sulfate producing adenosine 5'-phosphosulfate (APS) and diphosphate, the first enzymatic step in sulfur assimilation pathway. APS synthesis involves the formation of a high-energy phosphoric-sulfuric acid anhydride bond driven by GTP hydrolysis by CysN coupled to ATP hydrolysis by CysD. This Magnetococcus marinus (strain ATCC BAA-1437 / JCM 17883 / MC-1) protein is Sulfate adenylyltransferase subunit 2.